The sequence spans 377 residues: Nucleosome assembly protein 1;2 (377 aa).

Residues valine 26–glutamate 80 are a coiled coil. A Nuclear export signal motif is present at residues leucine 47–glutamine 62. The short motif at lysine 223 to lysine 228 is the Nuclear localization signal element. A disordered region spans residues glutamate 298 to glutamine 377. The span at alanine 299–glutamate 342 shows a compositional bias: acidic residues. Cysteine 374 carries the cysteine methyl ester modification. A lipid anchor (S-farnesyl cysteine) is attached at cysteine 374. Residues lysine 375–glutamine 377 constitute a propeptide, removed in mature form.

The protein belongs to the nucleosome assembly protein (NAP) family. As to quaternary structure, binds preferentially histone H1 in vitro. Interacts with CYCB1;1.

It localises to the nucleus. Its subcellular location is the cytoplasm. In terms of biological role, may modulate chromatin structure by regulation of nucleosome assembly/disassembly. Could function together with B-type cyclins in the regulation of microtubule dynamics. In Nicotiana tabacum (Common tobacco), this protein is Nucleosome assembly protein 1;2 (NAP1;2).